The chain runs to 211 residues: Thiamine-phosphate synthase (211 aa).

Residues 43 to 47 (QLRDK) and Asn-75 each bind 4-amino-2-methyl-5-(diphosphooxymethyl)pyrimidine. Residues Asp-76 and Asp-95 each coordinate Mg(2+). Ser-114 is a 4-amino-2-methyl-5-(diphosphooxymethyl)pyrimidine binding site. Position 140–142 (140–142 (TAS)) interacts with 2-[(2R,5Z)-2-carboxy-4-methylthiazol-5(2H)-ylidene]ethyl phosphate. Lys-143 lines the 4-amino-2-methyl-5-(diphosphooxymethyl)pyrimidine pocket. 2-[(2R,5Z)-2-carboxy-4-methylthiazol-5(2H)-ylidene]ethyl phosphate-binding positions include Gly-170 and 190-191 (IS).

Belongs to the thiamine-phosphate synthase family. Mg(2+) is required as a cofactor.

The catalysed reaction is 2-[(2R,5Z)-2-carboxy-4-methylthiazol-5(2H)-ylidene]ethyl phosphate + 4-amino-2-methyl-5-(diphosphooxymethyl)pyrimidine + 2 H(+) = thiamine phosphate + CO2 + diphosphate. It carries out the reaction 2-(2-carboxy-4-methylthiazol-5-yl)ethyl phosphate + 4-amino-2-methyl-5-(diphosphooxymethyl)pyrimidine + 2 H(+) = thiamine phosphate + CO2 + diphosphate. The enzyme catalyses 4-methyl-5-(2-phosphooxyethyl)-thiazole + 4-amino-2-methyl-5-(diphosphooxymethyl)pyrimidine + H(+) = thiamine phosphate + diphosphate. Its pathway is cofactor biosynthesis; thiamine diphosphate biosynthesis; thiamine phosphate from 4-amino-2-methyl-5-diphosphomethylpyrimidine and 4-methyl-5-(2-phosphoethyl)-thiazole: step 1/1. Functionally, condenses 4-methyl-5-(beta-hydroxyethyl)thiazole monophosphate (THZ-P) and 2-methyl-4-amino-5-hydroxymethyl pyrimidine pyrophosphate (HMP-PP) to form thiamine monophosphate (TMP). The polypeptide is Thiamine-phosphate synthase (Coprothermobacter proteolyticus (strain ATCC 35245 / DSM 5265 / OCM 4 / BT)).